Reading from the N-terminus, the 1060-residue chain is Carbamoyl phosphate synthase large chain (1060 aa).

The tract at residues 1 to 401 (MPKRQDIHKI…SLLKAVRSLE (401 aa)) is carboxyphosphate synthetic domain. ATP is bound by residues Arg129, Arg169, Gly175, Gly176, Arg208, Ile210, Glu215, Gly241, Val242, His243, Gln284, and Glu298. The ATP-grasp 1 domain occupies 133-327 (KNLMQKLHEP…IAKMAAKIAV (195 aa)). Mg(2+)-binding residues include Gln284, Glu298, and Asn300. Positions 284, 298, and 300 each coordinate Mn(2+). The interval 402-546 (VGLIHPERPA…YSTYESSTES (145 aa)) is oligomerization domain. The carbamoyl phosphate synthetic domain stretch occupies residues 547–929 (VKSDKPSVLV…ALYKAFEAAG (383 aa)). The 191-residue stretch at 671-861 (DQVIKSLKLP…LAQVATLAIL (191 aa)) folds into the ATP-grasp 2 domain. ATP is bound by residues Arg707, His746, Leu748, Glu752, Gly777, Ile778, His779, Ser780, Gln820, and Glu832. Positions 820, 832, and 834 each coordinate Mg(2+). Positions 820, 832, and 834 each coordinate Mn(2+). The MGS-like domain occupies 930 to 1060 (MHLPQFGRAL…QAFSISPIKS (131 aa)). The allosteric domain stretch occupies residues 930–1060 (MHLPQFGRAL…QAFSISPIKS (131 aa)).

Belongs to the CarB family. In terms of assembly, composed of two chains; the small (or glutamine) chain promotes the hydrolysis of glutamine to ammonia, which is used by the large (or ammonia) chain to synthesize carbamoyl phosphate. Tetramer of heterodimers (alpha,beta)4. It depends on Mg(2+) as a cofactor. Requires Mn(2+) as cofactor.

The enzyme catalyses hydrogencarbonate + L-glutamine + 2 ATP + H2O = carbamoyl phosphate + L-glutamate + 2 ADP + phosphate + 2 H(+). It carries out the reaction hydrogencarbonate + NH4(+) + 2 ATP = carbamoyl phosphate + 2 ADP + phosphate + 2 H(+). It functions in the pathway amino-acid biosynthesis; L-arginine biosynthesis; carbamoyl phosphate from bicarbonate: step 1/1. It participates in pyrimidine metabolism; UMP biosynthesis via de novo pathway; (S)-dihydroorotate from bicarbonate: step 1/3. In terms of biological role, large subunit of the glutamine-dependent carbamoyl phosphate synthetase (CPSase). CPSase catalyzes the formation of carbamoyl phosphate from the ammonia moiety of glutamine, carbonate, and phosphate donated by ATP, constituting the first step of 2 biosynthetic pathways, one leading to arginine and/or urea and the other to pyrimidine nucleotides. The large subunit (synthetase) binds the substrates ammonia (free or transferred from glutamine from the small subunit), hydrogencarbonate and ATP and carries out an ATP-coupled ligase reaction, activating hydrogencarbonate by forming carboxy phosphate which reacts with ammonia to form carbamoyl phosphate. This chain is Carbamoyl phosphate synthase large chain, found in Lacticaseibacillus casei (strain BL23) (Lactobacillus casei).